Here is a 617-residue protein sequence, read N- to C-terminus: Kelch-like protein 9 (617 aa).

A BTB domain is found at 50-119; sequence CDVTLVPGDG…IYTAKLSLNM (70 aa). The BACK domain occupies 154-255; sequence CVEVGRIANT…TPQDLINYVQ (102 aa). 6 Kelch repeats span residues 299-347, 348-399, 400-446, 448-493, 495-545, and 546-594; these read HLVT…VIGN, FLYV…ALKG, HLYA…VYGG, MYIS…TVGD, LYVI…VFEN, and KIYV…TLTV. The tract at residues 595-617 is disordered; it reads FPPEENPGSPSRESPLSAPSDHS.

As to quaternary structure, component of the BCR(KLHL9-KLHL13) E3 ubiquitin ligase complex, at least composed of CUL3, KLHL9, KLHL13 and RBX1. Interacts with AURKB.

It functions in the pathway protein modification; protein ubiquitination. Its function is as follows. Substrate-specific adapter of a BCR (BTB-CUL3-RBX1) E3 ubiquitin-protein ligase complex required for mitotic progression and cytokinesis. The BCR(KLHL9-KLHL13) E3 ubiquitin ligase complex mediates the ubiquitination of AURKB and controls the dynamic behavior of AURKB on mitotic chromosomes and thereby coordinates faithful mitotic progression and completion of cytokinesis. The protein is Kelch-like protein 9 (Klhl9) of Mus musculus (Mouse).